A 275-amino-acid chain; its full sequence is Ribosomal protein L11 methyltransferase (275 aa).

The S-adenosyl-L-methionine site is built by T130, G151, D172, and N213.

This sequence belongs to the methyltransferase superfamily. PrmA family.

It is found in the cytoplasm. It catalyses the reaction L-lysyl-[protein] + 3 S-adenosyl-L-methionine = N(6),N(6),N(6)-trimethyl-L-lysyl-[protein] + 3 S-adenosyl-L-homocysteine + 3 H(+). Methylates ribosomal protein L11. The sequence is that of Ribosomal protein L11 methyltransferase from Wolinella succinogenes (strain ATCC 29543 / DSM 1740 / CCUG 13145 / JCM 31913 / LMG 7466 / NCTC 11488 / FDC 602W) (Vibrio succinogenes).